The sequence spans 121 residues: Large ribosomal subunit protein uL18 (121 aa).

The protein belongs to the universal ribosomal protein uL18 family. Part of the 50S ribosomal subunit; part of the 5S rRNA/L5/L18/L25 subcomplex. Contacts the 5S and 23S rRNAs.

Its function is as follows. This is one of the proteins that bind and probably mediate the attachment of the 5S RNA into the large ribosomal subunit, where it forms part of the central protuberance. The sequence is that of Large ribosomal subunit protein uL18 from Spiroplasma kunkelii.